The sequence spans 154 residues: Small ribosomal subunit protein bS16 (154 aa).

Low complexity predominate over residues 111-121 (AAAGLAEAPTK). The tract at residues 111–154 (AAAGLAEAPTKPAKKAAKAEAAPKTDEAAPKTEEQAGAGSGEQG) is disordered. The span at 127 to 144 (AKAEAAPKTDEAAPKTEE) shows a compositional bias: basic and acidic residues.

Belongs to the bacterial ribosomal protein bS16 family.

This chain is Small ribosomal subunit protein bS16, found in Salinispora tropica (strain ATCC BAA-916 / DSM 44818 / JCM 13857 / NBRC 105044 / CNB-440).